The primary structure comprises 80 residues: ATP synthase subunit c (80 aa).

The next 2 membrane-spanning stretches (helical) occupy residues 11–31 (MAAA…IGIL) and 53–73 (FFVV…LGLY).

Belongs to the ATPase C chain family. F-type ATPases have 2 components, F(1) - the catalytic core - and F(0) - the membrane proton channel. F(1) has five subunits: alpha(3), beta(3), gamma(1), delta(1), epsilon(1). F(0) has three main subunits: a(1), b(2) and c(10-14). The alpha and beta chains form an alternating ring which encloses part of the gamma chain. F(1) is attached to F(0) by a central stalk formed by the gamma and epsilon chains, while a peripheral stalk is formed by the delta and b chains.

Its subcellular location is the cell inner membrane. F(1)F(0) ATP synthase produces ATP from ADP in the presence of a proton or sodium gradient. F-type ATPases consist of two structural domains, F(1) containing the extramembraneous catalytic core and F(0) containing the membrane proton channel, linked together by a central stalk and a peripheral stalk. During catalysis, ATP synthesis in the catalytic domain of F(1) is coupled via a rotary mechanism of the central stalk subunits to proton translocation. Functionally, key component of the F(0) channel; it plays a direct role in translocation across the membrane. A homomeric c-ring of between 10-14 subunits forms the central stalk rotor element with the F(1) delta and epsilon subunits. This is ATP synthase subunit c from Erwinia tasmaniensis (strain DSM 17950 / CFBP 7177 / CIP 109463 / NCPPB 4357 / Et1/99).